Here is a 360-residue protein sequence, read N- to C-terminus: Dynein intermediate light chain dil1 (360 aa).

It belongs to the dynein light intermediate chain DYN3 family. In terms of assembly, the dynein complex consists of at least two heavy chains and a number of intermediate and light chains. Interacts with rga3, sec10, sec16, syp1, rvb2, spbc19c7.04c, spbc2f12.05 and spac3a11.10c. In terms of processing, the N-terminal part is acetylated.

It is found in the cytoplasm. Its subcellular location is the cytoskeleton. Its function is as follows. Component of the cytoplasmic dynein which acts as a motor for the intracellular retrograde motility of vesicles and organelles along microtubules. Promotes oscillatory nuclear movement and efficient pairing of homologous centromeres during meiotic prophase. This chain is Dynein intermediate light chain dil1 (dil1), found in Schizosaccharomyces pombe (strain 972 / ATCC 24843) (Fission yeast).